The primary structure comprises 321 residues: NADH-ubiquinone oxidoreductase chain 1 (321 aa).

Helical transmembrane passes span 9–29, 75–95, 106–126, 151–171, 177–197, 219–239, 256–276, and 297–317; these read ITNS…LTLL, ILFT…WAPM, LGLL…LWSG, TLGL…LMLF, HMWL…STLA, VEFS…NILF, PQLF…LFLW, and YLPL…ALCG.

The protein belongs to the complex I subunit 1 family.

Its subcellular location is the mitochondrion inner membrane. The enzyme catalyses a ubiquinone + NADH + 5 H(+)(in) = a ubiquinol + NAD(+) + 4 H(+)(out). Its function is as follows. Core subunit of the mitochondrial membrane respiratory chain NADH dehydrogenase (Complex I) that is believed to belong to the minimal assembly required for catalysis. Complex I functions in the transfer of electrons from NADH to the respiratory chain. The immediate electron acceptor for the enzyme is believed to be ubiquinone. The protein is NADH-ubiquinone oxidoreductase chain 1 (MT-ND1) of Lycodon semicarinatus (Ryukyu odd-tooth snake).